Here is a 286-residue protein sequence, read N- to C-terminus: Co-chaperone protein DjlA (286 aa).

The Periplasmic portion of the chain corresponds to 1–6 (MQFIGK). The chain crosses the membrane as a helical span at residues 7–31 (IIGFFIGYKLFGGLFGGLLGIFIGH). Residues 32–286 (LADKKLYELG…DLICKTKGWK (255 aa)) are Cytoplasmic-facing. The region spanning 220–286 (DAYTVLGINE…DLICKTKGWK (67 aa)) is the J domain.

In terms of assembly, homodimer.

It localises to the cell inner membrane. Its function is as follows. Regulatory DnaK co-chaperone. Direct interaction between DnaK and DjlA is needed for the induction of the wcaABCDE operon, involved in the synthesis of a colanic acid polysaccharide capsule, possibly through activation of the RcsB/RcsC phosphotransfer signaling pathway. The colanic acid capsule may help the bacterium survive conditions outside the host. The polypeptide is Co-chaperone protein DjlA (Haemophilus ducreyi (strain 35000HP / ATCC 700724)).